Reading from the N-terminus, the 132-residue chain is Long-chain acyl-CoA thioesterase FadM (132 aa).

Asp13 is an active-site residue.

This sequence belongs to the 4-hydroxybenzoyl-CoA thioesterase family. Homotetramer.

The catalysed reaction is (3E,5Z)-tetradecadienoyl-CoA + H2O = (3E,5Z)-tetradecadienoate + CoA + H(+). It catalyses the reaction (3E,5Z)-dodecadienoyl-CoA + H2O = (3E,5Z)-dodecadienoate + CoA + H(+). It carries out the reaction (9Z)-octadecenoyl-CoA + H2O = (9Z)-octadecenoate + CoA + H(+). The enzyme catalyses octadecanoyl-CoA + H2O = octadecanoate + CoA + H(+). The catalysed reaction is hexadecanoyl-CoA + H2O = hexadecanoate + CoA + H(+). It catalyses the reaction (3S)-hydroxytetradecanoyl-CoA + H2O = (3S)-hydroxytetradecanoate + CoA + H(+). It carries out the reaction tetradecanoyl-CoA + H2O = tetradecanoate + CoA + H(+). In terms of biological role, long-chain acyl-CoA thioesterase that could be involved in beta-oxidation of fatty acids. Is most active with 3,5-tetradecadienoyl-CoA, a metabolite of oleic acid that is hydrolyzed during oleate beta-oxidation, but can also use other substrates such as 3,5-dodecadienoyl-CoA, 9-cis-octadecenoyl-CoA, octadecanoyl-CoA, hexadecanoyl-CoA, 3-hydroxytetradecanoyl-CoA and tetradecanoyl-CoA. The chain is Long-chain acyl-CoA thioesterase FadM from Escherichia coli (strain K12).